Here is a 325-residue protein sequence, read N- to C-terminus: Dimethylallyltranstransferase (325 aa).

Isopentenyl diphosphate contacts are provided by arginine 54 and histidine 84. 2 residues coordinate Mg(2+): aspartate 91 and aspartate 95. The short motif at 91-95 (DRVVD) is the DDXXD motif element. Arginine 101 is an isopentenyl diphosphate binding site. Positions 217-221 (RDIIA) match the DDXXD motif motif.

It belongs to the FPP/GGPP synthase family. It depends on Mg(2+) as a cofactor.

The enzyme catalyses isopentenyl diphosphate + dimethylallyl diphosphate = (2E)-geranyl diphosphate + diphosphate. Its pathway is isoprenoid biosynthesis; geranyl diphosphate biosynthesis; geranyl diphosphate from dimethylallyl diphosphate and isopentenyl diphosphate: step 1/1. Functionally, catalyzes the addition of isopentenyl diphosphate (IPP) onto dimethylallyl diphosphate (DMAPP) to form geranyl pyrophosphate (GPP). Is probably involved in the biosynthesis of decaprenyl diphosphate, which is required for mycobacterial cell wall synthesis. Could be required for host endothelial-cell invasion and/or intracellular survival. This chain is Dimethylallyltranstransferase, found in Mycobacterium tuberculosis (strain ATCC 25618 / H37Rv).